The primary structure comprises 222 residues: ATP-dependent dethiobiotin synthetase BioD (222 aa).

Residue 12 to 17 (DVGKTF) participates in ATP binding. Thr16 contacts Mg(2+). Lys37 is an active-site residue. Ser41 lines the substrate pocket. Residues Asp54 and 113–116 (EGAG) contribute to the ATP site. Mg(2+) is bound by residues Asp54 and Glu113.

This sequence belongs to the dethiobiotin synthetase family. As to quaternary structure, homodimer. Requires Mg(2+) as cofactor.

It is found in the cytoplasm. It catalyses the reaction (7R,8S)-7,8-diammoniononanoate + CO2 + ATP = (4R,5S)-dethiobiotin + ADP + phosphate + 3 H(+). It participates in cofactor biosynthesis; biotin biosynthesis; biotin from 7,8-diaminononanoate: step 1/2. Functionally, catalyzes a mechanistically unusual reaction, the ATP-dependent insertion of CO2 between the N7 and N8 nitrogen atoms of 7,8-diaminopelargonic acid (DAPA, also called 7,8-diammoniononanoate) to form a ureido ring. This chain is ATP-dependent dethiobiotin synthetase BioD, found in Anoxybacillus flavithermus (strain DSM 21510 / WK1).